Consider the following 336-residue polypeptide: 4-hydroxythreonine-4-phosphate dehydrogenase (336 aa).

Thr-140 provides a ligand contact to substrate. Residues His-171, His-216, and His-271 each coordinate a divalent metal cation. Residues Lys-279, Asn-288, and Arg-297 each coordinate substrate.

The protein belongs to the PdxA family. Homodimer. The cofactor is Zn(2+). Mg(2+) serves as cofactor. Co(2+) is required as a cofactor.

The protein localises to the cytoplasm. The catalysed reaction is 4-(phosphooxy)-L-threonine + NAD(+) = 3-amino-2-oxopropyl phosphate + CO2 + NADH. The protein operates within cofactor biosynthesis; pyridoxine 5'-phosphate biosynthesis; pyridoxine 5'-phosphate from D-erythrose 4-phosphate: step 4/5. Catalyzes the NAD(P)-dependent oxidation of 4-(phosphooxy)-L-threonine (HTP) into 2-amino-3-oxo-4-(phosphooxy)butyric acid which spontaneously decarboxylates to form 3-amino-2-oxopropyl phosphate (AHAP). The polypeptide is 4-hydroxythreonine-4-phosphate dehydrogenase (Erythrobacter litoralis (strain HTCC2594)).